A 1171-amino-acid polypeptide reads, in one-letter code: ATP-dependent helicase/deoxyribonuclease subunit B (1171 aa).

The UvrD-like helicase ATP-binding domain occupies 1–343; sequence MSLRFVIGRA…LVAEENYRYR (343 aa). 8–15 serves as a coordination point for ATP; that stretch reads GRAGSGKS. In terms of domain architecture, UvrD-like helicase C-terminal spans 281 to 587; the sequence is MEQPRFHSPA…QFANIPPSLD (307 aa). Positions 805, 1129, 1132, and 1138 each coordinate [4Fe-4S] cluster.

The protein belongs to the helicase family. AddB/RexB type 1 subfamily. In terms of assembly, heterodimer of AddA and AddB. It depends on Mg(2+) as a cofactor. [4Fe-4S] cluster serves as cofactor.

The heterodimer acts as both an ATP-dependent DNA helicase and an ATP-dependent, dual-direction single-stranded exonuclease. Recognizes the chi site generating a DNA molecule suitable for the initiation of homologous recombination. The AddB subunit has 5' -&gt; 3' nuclease activity but not helicase activity. This is ATP-dependent helicase/deoxyribonuclease subunit B from Bacillus thuringiensis subsp. konkukian (strain 97-27).